Reading from the N-terminus, the 493-residue chain is MKHKVKHIHFVGIGGSGMSGIAEVMLNLGYKISGSDIHDSVTTRRLKKLGATVYIGHARTHVESADAVVTSTAILPDNPEVLAARESKVPVVPRAIMLAELLRLRQGIAIAGTHGKTTTTSLITSVLAEAGMDPTFVIGGRLEAAGSHAKLGRGEFIVVEADESDASFLHLQPVLAVVTNIDADHMDTYEHDFGKLKQAFVDFVQHLPFYGMAVLCVDDAHVLEIMPAITKPVTTYGLSETAQVRAADIRHSEGQMHFTALIGVNGKTRKLKIVLNLPGLHNVQNALAAIAVCNEVGLPDVSIVRALADFKGVDRRFQRYGEIPLTDPETGRNGSFTLIDDYGHHPVEMAATIAAARGAFPGRRLVLAFQPHRYTRTRDLFEDFVKVLSTADVLLLTEVYSAGEAPIIAADSKSLARSLRVLGKVEPIFVERVDELEEAIHSIARDKDVVLVMGAGSVGGVAPTLSRDSQVEARLLVSPKENREPAVLLLQGS.

112–118 provides a ligand contact to ATP; that stretch reads GTHGKTT.

This sequence belongs to the MurCDEF family.

The protein resides in the cytoplasm. The enzyme catalyses UDP-N-acetyl-alpha-D-muramate + L-alanine + ATP = UDP-N-acetyl-alpha-D-muramoyl-L-alanine + ADP + phosphate + H(+). The protein operates within cell wall biogenesis; peptidoglycan biosynthesis. Its function is as follows. Cell wall formation. This Nitrosospira multiformis (strain ATCC 25196 / NCIMB 11849 / C 71) protein is UDP-N-acetylmuramate--L-alanine ligase.